A 363-amino-acid polypeptide reads, in one-letter code: NADH-quinone oxidoreductase subunit H (363 aa).

Helical transmembrane passes span 29 to 49, 62 to 82, 96 to 116, 127 to 147, 163 to 183, 202 to 222, 238 to 257, 264 to 286, 299 to 319, and 339 to 359; these read VLKILLIAVPVIVSVAFYVVW, GPMYVGMGIFQAFADVFKLLF, FIIAPLLTLAPAFAAWSVVPF, VGLLYLLAMTSLGVYGIILAG, AAQVVSYEIAMGFALVGVMIA, FFDWFLIPLFPLFIVYWVSGV, EIVAGHMVEYSGGAFALFFL, ILVSFLISIFFLGGWLSPIQGWV, KGGWPWLLMKVFFFASAYIWF, and FIPLTIVWIAVTALMVFYGVI.

It belongs to the complex I subunit 1 family. As to quaternary structure, NDH-1 is composed of 14 different subunits. Subunits NuoA, H, J, K, L, M, N constitute the membrane sector of the complex.

The protein localises to the cell inner membrane. The enzyme catalyses a quinone + NADH + 5 H(+)(in) = a quinol + NAD(+) + 4 H(+)(out). Functionally, NDH-1 shuttles electrons from NADH, via FMN and iron-sulfur (Fe-S) centers, to quinones in the respiratory chain. The immediate electron acceptor for the enzyme in this species is believed to be ubiquinone. Couples the redox reaction to proton translocation (for every two electrons transferred, four hydrogen ions are translocated across the cytoplasmic membrane), and thus conserves the redox energy in a proton gradient. This subunit may bind ubiquinone. The protein is NADH-quinone oxidoreductase subunit H of Xanthomonas oryzae pv. oryzae (strain PXO99A).